Reading from the N-terminus, the 131-residue chain is MPNSLIADAVARIRNGQMARLREVTIYHSRVLVEIAALLKEEGYIVGYEVIEIRPSVKRIIIRLKYYCGQPVISKLKLFSRPGKRIYSRACEIPKFYGGLGISVLSTSKGILPSYKAVSSNCGGELLFGVY.

Belongs to the universal ribosomal protein uS8 family. In terms of assembly, part of the 30S ribosomal subunit. Contacts proteins S5 and S12.

In terms of biological role, one of the primary rRNA binding proteins, it binds directly to 16S rRNA central domain where it helps coordinate assembly of the platform of the 30S subunit. The polypeptide is Small ribosomal subunit protein uS8 (Neorickettsia sennetsu (strain ATCC VR-367 / Miyayama) (Ehrlichia sennetsu)).